We begin with the raw amino-acid sequence, 372 residues long: MNFELLATDGKARRGRLTFPRGVVETPAFMPVGTYGTVKGMLPRDIEDIGAQIILGNTFHLWLRPGTEVIQRHGDLHDFMQWKGPILTDSGGFQVFSLGAMRKIKEEGVTFASPVDGAKVFMGPEESMAVQRALGSDIVMIFDECTPYPADHDVAKRSMELSLRWAKRSKIAHGDSPSALFGIVQGGMHEDLRLRSLDGLQEIGFDGLAIGGLSVGEPKEEMIRVLDFLPPQMPADKPRYLMGVGKPEDLVEGVRRGVDMFDCVMPTRNARNGHLFVDSGVIKIRNSVHKHDDSTLDPTCDCYTCKHFSRAYLHHLDKCGEMLGSMLNTIHNLRHYQRVMAGLREAIQQGTLAAFVDAFYAKRGLPTPPLDA.

Catalysis depends on D89, which acts as the Proton acceptor. Residues 89–93, D143, Q185, and G212 each bind substrate; that span reads DSGGF. The segment at 243-249 is RNA binding; sequence GVGKPED. D262 functions as the Nucleophile in the catalytic mechanism. An RNA binding; important for wobble base 34 recognition region spans residues 267 to 271; sequence TRNAR. Zn(2+)-binding residues include C300, C302, C305, and H331.

This sequence belongs to the queuine tRNA-ribosyltransferase family. As to quaternary structure, homodimer. Within each dimer, one monomer is responsible for RNA recognition and catalysis, while the other monomer binds to the replacement base PreQ1. Requires Zn(2+) as cofactor.

It carries out the reaction 7-aminomethyl-7-carbaguanine + guanosine(34) in tRNA = 7-aminomethyl-7-carbaguanosine(34) in tRNA + guanine. The protein operates within tRNA modification; tRNA-queuosine biosynthesis. In terms of biological role, catalyzes the base-exchange of a guanine (G) residue with the queuine precursor 7-aminomethyl-7-deazaguanine (PreQ1) at position 34 (anticodon wobble position) in tRNAs with GU(N) anticodons (tRNA-Asp, -Asn, -His and -Tyr). Catalysis occurs through a double-displacement mechanism. The nucleophile active site attacks the C1' of nucleotide 34 to detach the guanine base from the RNA, forming a covalent enzyme-RNA intermediate. The proton acceptor active site deprotonates the incoming PreQ1, allowing a nucleophilic attack on the C1' of the ribose to form the product. After dissociation, two additional enzymatic reactions on the tRNA convert PreQ1 to queuine (Q), resulting in the hypermodified nucleoside queuosine (7-(((4,5-cis-dihydroxy-2-cyclopenten-1-yl)amino)methyl)-7-deazaguanosine). The polypeptide is Queuine tRNA-ribosyltransferase (Pseudomonas aeruginosa (strain LESB58)).